The sequence spans 197 residues: Pyridoxal 5'-phosphate synthase subunit PdxT (197 aa).

G50–S52 contributes to the L-glutamine binding site. C82 functions as the Nucleophile in the catalytic mechanism. L-glutamine contacts are provided by residues R111 and I140 to R141. Catalysis depends on charge relay system residues H176 and E178.

Belongs to the glutaminase PdxT/SNO family. In the presence of PdxS, forms a dodecamer of heterodimers. Only shows activity in the heterodimer.

It carries out the reaction aldehydo-D-ribose 5-phosphate + D-glyceraldehyde 3-phosphate + L-glutamine = pyridoxal 5'-phosphate + L-glutamate + phosphate + 3 H2O + H(+). The enzyme catalyses L-glutamine + H2O = L-glutamate + NH4(+). It functions in the pathway cofactor biosynthesis; pyridoxal 5'-phosphate biosynthesis. Catalyzes the hydrolysis of glutamine to glutamate and ammonia as part of the biosynthesis of pyridoxal 5'-phosphate. The resulting ammonia molecule is channeled to the active site of PdxS. The chain is Pyridoxal 5'-phosphate synthase subunit PdxT from Streptomyces griseus subsp. griseus (strain JCM 4626 / CBS 651.72 / NBRC 13350 / KCC S-0626 / ISP 5235).